We begin with the raw amino-acid sequence, 338 residues long: Nuclear hormone receptor family member nhr-52 (338 aa).

The nuclear receptor DNA-binding region spans 1-75 (MKCLVCCSYA…IGMRFSEPKQ (75 aa)). 2 NR C4-type zinc fingers span residues 3-23 (CLVC…CSAC) and 39-63 (CKYD…FKKC). An NR LBD domain is found at 98–337 (KDGVHYSNFL…KKLVNDIIIR (240 aa)).

Belongs to the nuclear hormone receptor family.

Its subcellular location is the nucleus. Functionally, orphan nuclear receptor. The sequence is that of Nuclear hormone receptor family member nhr-52 (nhr-52) from Caenorhabditis elegans.